Here is a 225-residue protein sequence, read N- to C-terminus: U2 small nuclear ribonucleoprotein B'' (225 aa).

The RRM 1 domain maps to 7–86; it reads HTIYINNMND…KPMRIQYAKT (80 aa). The segment at 100-144 is disordered; it reads DKEKKKEKKKAKTMEQAAAAANKKPGQGTPNAANTQGTAAPNPQV. An N6-acetyllysine; alternate modification is found at Lys-111. Lys-111 is covalently cross-linked (Glycyl lysine isopeptide (Lys-Gly) (interchain with G-Cter in SUMO2); alternate). A compositionally biased stretch (low complexity) spans 113 to 123; the sequence is MEQAAAAANKK. Over residues 127–140 the composition is skewed to polar residues; that stretch reads GTPNAANTQGTAAP. At Tyr-151 the chain carries Phosphotyrosine. Residues 151 to 225 form the RRM 2 domain; it reads YILFLNNLPE…HAMKITYAKK (75 aa).

It belongs to the RRM U1 A/B'' family. Identified in the spliceosome B complex. Identified in the spliceosome C complex. Present in a spliceosome complex assembled in vitro, and composed of SNRPB2, HPRP8BP and CRNKL1. Contributes to the binding of stem loop IV of U2 snRNA with SNRPP1.

It localises to the nucleus. Its function is as follows. Involved in pre-mRNA splicing as component of the spliceosome. Associated with sn-RNP U2, where it contributes to the binding of stem loop IV of U2 snRNA. The chain is U2 small nuclear ribonucleoprotein B'' (Snrpb2) from Mus musculus (Mouse).